We begin with the raw amino-acid sequence, 555 residues long: Sesquiterpene synthase 31 (555 aa).

The Mg(2+) site is built by Asp-308, Asp-312, Asp-451, Thr-455, and Glu-459. The short motif at 308–312 (DDTFD) is the DDXXD motif element.

The protein belongs to the terpene synthase family. Tpsa subfamily. Mg(2+) is required as a cofactor. Requires Mn(2+) as cofactor. Expressed in stem and leaf trichomes. Detected in roots, fruits and flowers.

The protein resides in the cytoplasm. It catalyses the reaction (2E,6E)-farnesyl diphosphate = viridiflorene + diphosphate. Its pathway is secondary metabolite biosynthesis; terpenoid biosynthesis. In terms of biological role, sesquiterpene synthase involved in the production of viridiflorene from (E,E)-farnesyl diphosphate (FPP). Has no activity with (Z,Z)-FPP. Can act with a low efficiency as a monoterpene synthase with geranyl diphosphate as substrate. This Solanum lycopersicum (Tomato) protein is Sesquiterpene synthase 31.